The chain runs to 345 residues: Phosphoribosylformylglycinamidine cyclo-ligase (345 aa).

The protein belongs to the AIR synthase family.

The protein resides in the cytoplasm. It catalyses the reaction 2-formamido-N(1)-(5-O-phospho-beta-D-ribosyl)acetamidine + ATP = 5-amino-1-(5-phospho-beta-D-ribosyl)imidazole + ADP + phosphate + H(+). It participates in purine metabolism; IMP biosynthesis via de novo pathway; 5-amino-1-(5-phospho-D-ribosyl)imidazole from N(2)-formyl-N(1)-(5-phospho-D-ribosyl)glycinamide: step 2/2. The sequence is that of Phosphoribosylformylglycinamidine cyclo-ligase from Prochlorococcus marinus (strain MIT 9313).